The chain runs to 182 residues: uncharacterized protein (182 aa).

Helical transmembrane passes span 29–49 (IISG…AGLP) and 63–83 (FYFP…MLTL).

It is found in the cell membrane. This is an uncharacterized protein from Ureaplasma parvum serovar 3 (strain ATCC 700970).